A 721-amino-acid chain; its full sequence is Peptide-N(4)-(N-acetyl-beta-glucosaminyl)asparagine amidase (721 aa).

Cys193, Cys196, Cys225, and Cys228 together coordinate Zn(2+). The active-site Nucleophile is Cys251. Active-site residues include His278 and Asp295.

It belongs to the transglutaminase-like superfamily. PNGase family. Zn(2+) is required as a cofactor.

Its subcellular location is the cytoplasm. The catalysed reaction is Hydrolysis of an N(4)-(acetyl-beta-D-glucosaminyl)asparagine residue in which the glucosamine residue may be further glycosylated, to yield a (substituted) N-acetyl-beta-D-glucosaminylamine and a peptide containing an aspartate residue.. In terms of biological role, specifically deglycosylates the denatured form of N-linked glycoproteins in the cytoplasm and assists their proteasome-mediated degradation. Cleaves the beta-aspartyl-glucosamine (GlcNAc) of the glycan and the amide side chain of Asn, converting Asn to Asp. Prefers proteins containing high-mannose over those bearing complex type oligosaccharides. Can recognize misfolded proteins in the endoplasmic reticulum that are exported to the cytosol to be destroyed and deglycosylate them, while it has no activity toward native proteins. Deglycosylation is a prerequisite for subsequent proteasome-mediated degradation of some, but not all, misfolded glycoproteins. The polypeptide is Peptide-N(4)-(N-acetyl-beta-glucosaminyl)asparagine amidase (PNG1) (Arabidopsis thaliana (Mouse-ear cress)).